The primary structure comprises 277 residues: Diaminopimelate epimerase (277 aa).

Residues N13, Q46, and N66 each coordinate substrate. Residue C75 is the Proton donor of the active site. Substrate contacts are provided by residues 76 to 77 (GN), N159, N192, and 210 to 211 (ER). The active-site Proton acceptor is C219. 220 to 221 (GT) is a binding site for substrate.

It belongs to the diaminopimelate epimerase family. As to quaternary structure, homodimer.

Its subcellular location is the cytoplasm. It catalyses the reaction (2S,6S)-2,6-diaminopimelate = meso-2,6-diaminopimelate. The protein operates within amino-acid biosynthesis; L-lysine biosynthesis via DAP pathway; DL-2,6-diaminopimelate from LL-2,6-diaminopimelate: step 1/1. Its function is as follows. Catalyzes the stereoinversion of LL-2,6-diaminopimelate (L,L-DAP) to meso-diaminopimelate (meso-DAP), a precursor of L-lysine and an essential component of the bacterial peptidoglycan. This is Diaminopimelate epimerase from Azoarcus sp. (strain BH72).